Here is a 67-residue protein sequence, read N- to C-terminus: Sec-independent protein translocase protein TatA (67 aa).

Residues Met-1–Gly-21 form a helical membrane-spanning segment.

It belongs to the TatA/E family. The Tat system comprises two distinct complexes: a TatABC complex, containing multiple copies of TatA, TatB and TatC subunits, and a separate TatA complex, containing only TatA subunits. Substrates initially bind to the TatABC complex, which probably triggers association of the separate TatA complex to form the active translocon.

It is found in the cell inner membrane. Functionally, part of the twin-arginine translocation (Tat) system that transports large folded proteins containing a characteristic twin-arginine motif in their signal peptide across membranes. TatA could form the protein-conducting channel of the Tat system. In Ruthia magnifica subsp. Calyptogena magnifica, this protein is Sec-independent protein translocase protein TatA.